We begin with the raw amino-acid sequence, 226 residues long: Glycerol-3-phosphate acyltransferase (226 aa).

6 consecutive transmembrane segments (helical) span residues 1-21, 56-76, 102-122, 134-154, 159-178, and 182-197; these read MGLW…LGSF, GPGA…IALV, LVTL…FLGF, ILLA…AVVV, IVSL…MVVL, and LPYI…YVIL.

Belongs to the PlsY family. Probably interacts with PlsX.

Its subcellular location is the cell inner membrane. It catalyses the reaction an acyl phosphate + sn-glycerol 3-phosphate = a 1-acyl-sn-glycero-3-phosphate + phosphate. Its pathway is lipid metabolism; phospholipid metabolism. In terms of biological role, catalyzes the transfer of an acyl group from acyl-phosphate (acyl-PO(4)) to glycerol-3-phosphate (G3P) to form lysophosphatidic acid (LPA). This enzyme utilizes acyl-phosphate as fatty acyl donor, but not acyl-CoA or acyl-ACP. In Trichormus variabilis (strain ATCC 29413 / PCC 7937) (Anabaena variabilis), this protein is Glycerol-3-phosphate acyltransferase.